The sequence spans 98 residues: Co-chaperonin GroES (98 aa).

This sequence belongs to the GroES chaperonin family. Heptamer of 7 subunits arranged in a ring. Interacts with the chaperonin GroEL.

It is found in the cytoplasm. Functionally, together with the chaperonin GroEL, plays an essential role in assisting protein folding. The GroEL-GroES system forms a nano-cage that allows encapsulation of the non-native substrate proteins and provides a physical environment optimized to promote and accelerate protein folding. GroES binds to the apical surface of the GroEL ring, thereby capping the opening of the GroEL channel. The chain is Co-chaperonin GroES from Micrococcus luteus (strain ATCC 4698 / DSM 20030 / JCM 1464 / CCM 169 / CCUG 5858 / IAM 1056 / NBRC 3333 / NCIMB 9278 / NCTC 2665 / VKM Ac-2230) (Micrococcus lysodeikticus).